The sequence spans 445 residues: N-succinylarginine dihydrolase (445 aa).

Substrate-binding positions include 19-28, Asn110, and 137-138; these read AGLSFGNVAS and HR. Residue Glu174 is part of the active site. Substrate is bound at residue Arg214. Residue His250 is part of the active site. Residues Asp252 and Asn363 each coordinate substrate. Cys369 functions as the Nucleophile in the catalytic mechanism.

Belongs to the succinylarginine dihydrolase family. As to quaternary structure, homodimer.

It carries out the reaction N(2)-succinyl-L-arginine + 2 H2O + 2 H(+) = N(2)-succinyl-L-ornithine + 2 NH4(+) + CO2. It participates in amino-acid degradation; L-arginine degradation via AST pathway; L-glutamate and succinate from L-arginine: step 2/5. Catalyzes the hydrolysis of N(2)-succinylarginine into N(2)-succinylornithine, ammonia and CO(2). The sequence is that of N-succinylarginine dihydrolase from Shewanella woodyi (strain ATCC 51908 / MS32).